Here is an 851-residue protein sequence, read N- to C-terminus: DNA mismatch repair protein MutS (851 aa).

602-609 is a binding site for ATP; that stretch reads GPNMSGKS.

It belongs to the DNA mismatch repair MutS family.

In terms of biological role, this protein is involved in the repair of mismatches in DNA. It is possible that it carries out the mismatch recognition step. This protein has a weak ATPase activity. The protein is DNA mismatch repair protein MutS of Streptococcus pyogenes serotype M12 (strain MGAS2096).